The primary structure comprises 997 residues: Autophagy-related protein 9 (997 aa).

The Cytoplasmic segment spans residues 1–318; the sequence is MERDEYQLPN…DVYNYYLGNG (318 aa). A Phosphoserine modification is found at Ser-19. The segment covering 29–39 has biased composition (polar residues); the sequence is VNPSLNSQEMS. The disordered stretch occupies residues 29–88; that stretch reads VNPSLNSQEMSNFPLPDIERGSSLLHSTNDSREDVDENDLRVPESDQGTSTEEEDEVDEE. Positions 79–88 are enriched in acidic residues; it reads TEEEDEVDEE. Glycyl lysine isopeptide (Lys-Gly) (interchain with G-Cter in ubiquitin) cross-links involve residues Lys-113 and Lys-121. Ser-122 is modified (phosphoserine). Disordered regions lie at residues 127 to 159 and 214 to 234; these read LVEG…DGFD and HHDK…NQKH. A Glycyl lysine isopeptide (Lys-Gly) (interchain with G-Cter in ubiquitin) cross-link involves residue Lys-138. Ser-143 and Ser-144 each carry phosphoserine. Over residues 144-159 the composition is skewed to acidic residues; that stretch reads SEEEEDNEFINNDGFD. Over residues 221–233 the composition is skewed to polar residues; the sequence is ANNGPRNINGNQK. The helical transmembrane segment at 319 to 339 threads the bilayer; it reads FYCIILEKILNICTLLFVVFV. Residues 340-376 lie on the Lumenal side of the membrane; it reads STYMGHCVDYSKLPTSHRVSDIIIDKCYSNSITGFTK. A helical membrane pass occupies residues 377 to 397; the sequence is FFLWMFYFFVILKIVQLYFDV. Topologically, residues 398-538 are cytoplasmic; sequence QKLSELQNFY…EELQKRFMLA (141 aa). Residues 539–559 lie within the membrane without spanning it; sequence GFLNIILAPFLVTYFVLLYFF. The Cytoplasmic segment spans residues 560 to 620; the sequence is RYFNEYKTSP…DQFPKEKTNL (61 aa). A helical membrane pass occupies residues 621 to 641; sequence FLKFVSFICGSFVAILAFLTV. The Lumenal portion of the chain corresponds to 642 to 656; sequence FDPENFLNFEITSDR. Phosphoserine is present on Ser-657. The helical transmembrane segment at 657–677 threads the bilayer; the sequence is SVIFYITILGAIWSVSRNTIT. Residues 678–723 are Cytoplasmic-facing; it reads QEYHVFDPEETLKELYEYTHYLPKEWEGRYHKEEIKLEFCKLYNLR. Residue Lys-701 forms a Glycyl lysine isopeptide (Lys-Gly) (interchain with G-Cter in ubiquitin) linkage. The stretch at 724–744 is an intramembrane region; it reads IVILLRELTSLMITPFVLWFS. Over 745–997 the chain is Cytoplasmic; that stretch reads LPSSAGRIVD…EYYKKSDVGR (253 aa). Ser-787 and Ser-792 each carry phosphoserine. Thr-794 bears the Phosphothreonine mark. Ser-802 is modified (phosphoserine). Thr-804 bears the Phosphothreonine mark. Phosphoserine occurs at positions 831, 842, 864, 948, and 969.

It belongs to the ATG9 family. As to quaternary structure, homotrimer; forms a homotrimer with a central pore that forms a path between the two membrane leaflets. Interacts with ATG23 and ATG27 to form a cycling complex for trafficking to the PAS. Interacts (via N-terminus) with ATG11, required for recruitment of ATG9 to the PAS for the Cvt pathway during nutrient-rich conditions. Interacts (via N-terminus) with ATG17; required for recruitment to the PAS during autophagy and starved conditions. Interacts with ATG2 and ATG18; required for the retrieval of ATG9 from the PAS to the cytoplasmic pool. Interacts with ATG41. Interacts with the conserved oligomeric Golgi (COG) complex subunits COG3 and COG4. Interacts with TRS85. In terms of processing, phosphorylated by ATG1; phosphorylation is required for autophagy and cytoplasm to vacuole transport (Cvt) vesicle formation. Phosphorylation by ATG1 regulates ATG18 interaction and preautophagosome elongation. Phosphorylation at Ser-122 is required for selective autophagy by regulating anterograde trafficking and interaction with ATG23 and ATG27. Phosphorylation at Ser-122 prevents ubiquitination by the SCF(MET30) complex. Post-translationally, ubiquitinated by the SCF(MET30) complex in normal conditions, leading to its degradation by the proteasome, thereby preventing inappropriate induction of autophagy. Ubiquitination by the SCF(MET30) complex is prevented by phosphorylation at Ser-122.

The protein resides in the preautophagosomal structure membrane. The protein localises to the cytoplasmic vesicle membrane. It is found in the golgi apparatus membrane. It localises to the endoplasmic reticulum membrane. Its subcellular location is the mitochondrion membrane. It catalyses the reaction a 1,2-diacyl-sn-glycero-3-phosphocholine(in) = a 1,2-diacyl-sn-glycero-3-phosphocholine(out). The enzyme catalyses a 1,2-diacyl-sn-glycero-3-phospho-L-serine(in) = a 1,2-diacyl-sn-glycero-3-phospho-L-serine(out). It carries out the reaction a 1,2-diacyl-sn-glycero-3-phosphoethanolamine(in) = a 1,2-diacyl-sn-glycero-3-phosphoethanolamine(out). The catalysed reaction is a 1,2-diacyl-sn-glycero-3-phospho-(1D-myo-inositol-3-phosphate)(in) = a 1,2-diacyl-sn-glycero-3-phospho-(1D-myo-inositol-3-phosphate)(out). In terms of biological role, phospholipid scramblase involved in autophagy and cytoplasm to vacuole transport (Cvt) vesicle formation. Cycles between the preautophagosomal structure/phagophore assembly site (PAS) and the cytoplasmic vesicle pool and supplies membrane for the growing autophagosome. Lipid scramblase activity plays a key role in preautophagosomal structure/phagophore assembly by distributing the phospholipids that arrive through ATG2 from the cytoplasmic to the luminal leaflet of the bilayer, thereby driving autophagosomal membrane expansion. Required for mitophagy. Also involved in endoplasmic reticulum-specific autophagic process and is essential for the survival of cells subjected to severe ER stress. Different machineries are required for anterograde trafficking to the PAS during either the Cvt pathway or bulk autophagy and for retrograde trafficking. Recruits vesicle-tethering proteins TRS85 and YPT1 to the autophagosome formation site. Also recruits ATG23 and ATG8 to the PAS. This Saccharomyces cerevisiae (strain YJM789) (Baker's yeast) protein is Autophagy-related protein 9.